A 141-amino-acid chain; its full sequence is Hemoglobin subunit alpha (141 aa).

One can recognise a Globin domain in the interval 1–141 (VLSAADKGHV…VSTVLTSKYR (141 aa)). A Phosphoserine modification is found at Ser-3. 2 positions are modified to N6-succinyllysine: Lys-7 and Lys-11. Lys-16 is modified (N6-acetyllysine; alternate). Lys-16 carries the N6-succinyllysine; alternate modification. The residue at position 24 (Tyr-24) is a Phosphotyrosine. Position 35 is a phosphoserine (Ser-35). Lys-40 is modified (N6-succinyllysine). Position 49 is a phosphoserine (Ser-49). His-58 contacts O2. His-87 is a binding site for heme b. Ser-102 carries the post-translational modification Phosphoserine. Residue Thr-108 is modified to Phosphothreonine. Residue Ser-124 is modified to Phosphoserine. Residues Thr-134 and Thr-137 each carry the phosphothreonine modification. Phosphoserine is present on Ser-138.

This sequence belongs to the globin family. In terms of assembly, heterotetramer of two alpha chains and two beta chains. In terms of tissue distribution, red blood cells.

In terms of biological role, involved in oxygen transport from the lung to the various peripheral tissues. Hemopressin acts as an antagonist peptide of the cannabinoid receptor CNR1. Hemopressin-binding efficiently blocks cannabinoid receptor CNR1 and subsequent signaling. The sequence is that of Hemoglobin subunit alpha (HBA) from Macropus giganteus (Eastern gray kangaroo).